Here is a 281-residue protein sequence, read N- to C-terminus: NADPH-dependent 7-cyano-7-deazaguanine reductase (281 aa).

88–90 (VES) lines the substrate pocket. Residue 90–91 (SK) coordinates NADPH. Cysteine 189 serves as the catalytic Thioimide intermediate. Aspartate 196 functions as the Proton donor in the catalytic mechanism. 228–229 (HE) serves as a coordination point for substrate. 257–258 (RG) contacts NADPH.

This sequence belongs to the GTP cyclohydrolase I family. QueF type 2 subfamily. As to quaternary structure, homodimer.

The protein localises to the cytoplasm. It catalyses the reaction 7-aminomethyl-7-carbaguanine + 2 NADP(+) = 7-cyano-7-deazaguanine + 2 NADPH + 3 H(+). It functions in the pathway tRNA modification; tRNA-queuosine biosynthesis. Functionally, catalyzes the NADPH-dependent reduction of 7-cyano-7-deazaguanine (preQ0) to 7-aminomethyl-7-deazaguanine (preQ1). This is NADPH-dependent 7-cyano-7-deazaguanine reductase from Klebsiella pneumoniae (strain 342).